Consider the following 100-residue polypeptide: Urease subunit gamma (100 aa).

Belongs to the urease gamma subunit family. In terms of assembly, heterotrimer of UreA (gamma), UreB (beta) and UreC (alpha) subunits. Three heterotrimers associate to form the active enzyme.

It localises to the cytoplasm. It carries out the reaction urea + 2 H2O + H(+) = hydrogencarbonate + 2 NH4(+). The protein operates within nitrogen metabolism; urea degradation; CO(2) and NH(3) from urea (urease route): step 1/1. This chain is Urease subunit gamma, found in Azotobacter vinelandii (strain DJ / ATCC BAA-1303).